A 266-amino-acid polypeptide reads, in one-letter code: Large ribosomal subunit protein eL8 (266 aa).

Residues Lys-11, Lys-20, and Lys-21 each participate in a glycyl lysine isopeptide (Lys-Gly) (interchain with G-Cter in SUMO2) cross-link. An N6-acetyllysine modification is found at Lys-34. Residue Lys-48 forms a Glycyl lysine isopeptide (Lys-Gly) (interchain with G-Cter in SUMO2) linkage. Position 97 is an N6-acetyllysine; alternate (Lys-97). Lys-97 is covalently cross-linked (Glycyl lysine isopeptide (Lys-Gly) (interchain with G-Cter in SUMO2); alternate). Lys-125 participates in a covalent cross-link: Glycyl lysine isopeptide (Lys-Gly) (interchain with G-Cter in SUMO2). An N6-acetyllysine modification is found at Lys-217. Lys-245 is covalently cross-linked (Glycyl lysine isopeptide (Lys-Gly) (interchain with G-Cter in SUMO2)).

The protein belongs to the eukaryotic ribosomal protein eL8 family. Component of the large ribosomal subunit. Interacts with CRY1. Interacts with DICER1, AGO2, TARBP2, MOV10 and EIF6; they form a large RNA-induced silencing complex (RISC).

It localises to the cytoplasm. Component of the large ribosomal subunit. The ribosome is a large ribonucleoprotein complex responsible for the synthesis of proteins in the cell. This is Large ribosomal subunit protein eL8 (Rpl7a) from Mus musculus (Mouse).